Here is a 403-residue protein sequence, read N- to C-terminus: MKLNNLPSEFQEALPILEKIKAAGFEAYFVGGSVRDAILGRPIHDVDIATSSYPQETKQIFSRTIDVGIEHGTVLVLEGKKEYEITTFRTEEEYVDFRRPSQVSFVRSLEEDLKRRDFTVNAFALDEEAQIVDLFDGMTDLENRTLRAVGIPAERFNEDALRIMRGFRFAATLDFEIEPTTFEAMVQTAPLLEKISVERSFIEFDKLLMADFWRKGLRAMIDSKAYNFLPDLAGKSDELEAMLTSLTEEFRFSTSEQAWALLFVCLGIDNIKSFLKKWKTSNDFQRSVVKLVEIYQLRQAGPVTKQICFKYGKEFLYLVEELHQAQGFVTDFAAIDKIDQALTIHDKHEIVVNGGHLMKAFDLKPGPVLGELLKEVEFQIVEGQLENEEQAIMTFVKGILENE.

Gly32 and Arg35 together coordinate ATP. CTP is bound by residues Gly32 and Arg35. Mg(2+)-binding residues include Asp45 and Asp47. ATP contacts are provided by Arg116, Asp159, Arg162, Arg165, and Arg168. The CTP site is built by Arg116, Asp159, Arg162, Arg165, and Arg168.

Belongs to the tRNA nucleotidyltransferase/poly(A) polymerase family. Bacterial CCA-adding enzyme type 3 subfamily. In terms of assembly, homodimer. Mg(2+) serves as cofactor.

The catalysed reaction is a tRNA precursor + 2 CTP + ATP = a tRNA with a 3' CCA end + 3 diphosphate. It carries out the reaction a tRNA with a 3' CCA end + 2 CTP + ATP = a tRNA with a 3' CCACCA end + 3 diphosphate. In terms of biological role, catalyzes the addition and repair of the essential 3'-terminal CCA sequence in tRNAs without using a nucleic acid template. Adds these three nucleotides in the order of C, C, and A to the tRNA nucleotide-73, using CTP and ATP as substrates and producing inorganic pyrophosphate. tRNA 3'-terminal CCA addition is required both for tRNA processing and repair. Also involved in tRNA surveillance by mediating tandem CCA addition to generate a CCACCA at the 3' terminus of unstable tRNAs. While stable tRNAs receive only 3'-terminal CCA, unstable tRNAs are marked with CCACCA and rapidly degraded. This is CCA-adding enzyme from Streptococcus suis (strain 98HAH33).